The sequence spans 83 residues: Gas vesicle protein G2 (83 aa).

It belongs to the gas vesicle GvpG family. In terms of assembly, gvpF to GvpM interact with each other in vitro, and may form multi-subunit complex(es).

It localises to the gas vesicle. Functionally, proteins GvpF to GvpM might be involved in nucleating gas vesicle formation. A minor component of the gas vesicle. Gas vesicles are hollow, gas filled proteinaceous nanostructures found in several microbial planktonic microorganisms. They allow positioning of halobacteria at the optimal depth for growth in the poorly aerated, shallow brine pools of their habitat. In terms of biological role, expression of 2 c-vac DNA fragments containing 2 divergently transcribed regions (gvpE-gvpF-gvpG-gvpH-gvpI-gvpJ-gvpK-gvpL-gvpM and gvpA-gvpC-gvpN-gvpO) allows H.volcanii to produce gas vesicles. The protein is Gas vesicle protein G2 of Halobacterium salinarum (strain ATCC 700922 / JCM 11081 / NRC-1) (Halobacterium halobium).